We begin with the raw amino-acid sequence, 97 residues long: Secreted Ly-6/uPAR domain-containing protein 2 (97 aa).

The first 22 residues, 1-22 (MQLGTGLLLAAVLSLQLAAAEA), serve as a signal peptide directing secretion. 5 cysteine pairs are disulfide-bonded: C25–C47, C28–C34, C40–C68, C72–C88, and C89–C94. The region spanning 25 to 95 (CHQCTGFGGC…IACCQTSLCN (71 aa)) is the UPAR/Ly6 domain.

In terms of assembly, interacts with CHRNA3, CHRNA4, CHRNA5, CHRNA7, CHRNB2 and CHRNB4. Interacts with CHRM1 and CHRM3 probably in an allosteric manner. Expressed at highest levels in cervix and esophagus, followed by adult and fetal skin. Expressed at lower levels in brain, lung, stomach, small intestine, colon, rectum, uterus, and thymus. Not detected in spleen nor bone marrow. Up-regulated 3-fold in psoriatic lesional skin. In the epidermis, predominantly produced by keratinocytes of the suprabasal epidermal compartment (at protein level). In attached gingiva, produced at highest levels by basal cells located in the lowermost epithelial layers (at protein level). Detected in serum (at protein level).

Its subcellular location is the secreted. In terms of biological role, binds and may modulate the functional properties of nicotinic and muscarinic acetylcholine receptors. May regulate keratinocytes proliferation, differentiation and apoptosis. In vitro moderately inhibits ACh-evoked currents of alpha-3:beta-2-containing nAChRs and strongly these of alpha-4:beta-2-containing nAChRs, modulates alpha-7-containing nAChRs, and inhibits nicotine-induced signaling probably implicating alpha-3:beta-4-containing nAChRs. Proposed to act on alpha-3:beta-2 and alpha-7 nAChRs in an orthosteric, and on mAChRs, such as CHRM1 and CHRM3, in an allosteric manner. This chain is Secreted Ly-6/uPAR domain-containing protein 2, found in Homo sapiens (Human).